The primary structure comprises 444 residues: Type I restriction enzyme EcoDI specificity subunit (444 aa).

It belongs to the type-I restriction system S methylase family. As to quaternary structure, the type I restriction/modification system is composed of three polypeptides R, M and S; the restriction enzyme has stoichiometry R(2)M(2)S(1) while the methyltransferase is M(2)S(1).

Functionally, the specificity (S) subunit of a type I restriction enzyme; this subunit dictates DNA sequence specificity. The M and S subunits together form a methyltransferase (MTase) that methylates two adenine residues of the sequence 5'-TTAN(7)GTCY-3'. In the presence of the R subunit the complex can also act as an endonuclease, binding to the same target sequence but cutting the DNA some distance from this site. Whether the DNA is cut or modified depends on the methylation state of the target sequence. When the target site is unmodified, the DNA is cut. When the target site is hemimethylated, the complex acts as a maintenance MTase modifying the DNA so that both strands become methylated. After locating a non-methylated recognition site, the enzyme complex serves as a molecular motor that translocates DNA in an ATP-dependent manner until a collision occurs that triggers cleavage. The chain is Type I restriction enzyme EcoDI specificity subunit from Escherichia coli.